Reading from the N-terminus, the 303-residue chain is MESPHLSVLKNEVLEIFAPLSEGYFIDCTLGFGGHSEAILKAHPKLSLIGIDQDPHALEFSQKRLAPFKDRFSFREGRFSEVLPTLKELPIAGILADIGVSSLQLDDSSRGFSFHSERLDMRMNPNAQLSALEVVNSYPQDRLERIFKEYGEIKESKKLVSLISEERKKGRITSAEALSRLIERHFKRVGNIHPATLAFQAIRIEVNDELGEIGRALQTIGEIAKGRVSIISFHSLEDRLVKNFFKEWSNSCLCPPEAFRCTCGNNHEKGQILTKKPLVATPEESKANPRSRSAKMRAFEFKS.

S-adenosyl-L-methionine-binding positions include G33–H35, D52, F79, D97, and Q104.

Belongs to the methyltransferase superfamily. RsmH family.

The protein resides in the cytoplasm. It carries out the reaction cytidine(1402) in 16S rRNA + S-adenosyl-L-methionine = N(4)-methylcytidine(1402) in 16S rRNA + S-adenosyl-L-homocysteine + H(+). Specifically methylates the N4 position of cytidine in position 1402 (C1402) of 16S rRNA. This Wolinella succinogenes (strain ATCC 29543 / DSM 1740 / CCUG 13145 / JCM 31913 / LMG 7466 / NCTC 11488 / FDC 602W) (Vibrio succinogenes) protein is Ribosomal RNA small subunit methyltransferase H.